Reading from the N-terminus, the 182-residue chain is Mitochondrial FAD-linked sulfhydryl oxidase erv1 (182 aa).

The region spanning 75 to 177 is the ERV/ALR sulfhydryl oxidase domain; the sequence is RLPDVAELGR…FNCQVWSKKA (103 aa). FAD-binding positions include 81–87, histidine 91, and tyrosine 120; that span reads ELGRSTW. 2 disulfide bridges follow: cysteine 122–cysteine 125 and cysteine 153–cysteine 170. FAD is bound by residues 153–165 and 176–177; these read CEAH…RLGK and KA.

The cofactor is FAD.

The protein localises to the mitochondrion intermembrane space. It catalyses the reaction 2 R'C(R)SH + O2 = R'C(R)S-S(R)CR' + H2O2. In terms of biological role, FAD-dependent sulfhydryl oxidase that catalyzes disulfide bond formation. Required for the import and folding of small cysteine-containing proteins in the mitochondrial intermembrane space (IMS). The protein is Mitochondrial FAD-linked sulfhydryl oxidase erv1 (erv1) of Schizosaccharomyces pombe (strain 972 / ATCC 24843) (Fission yeast).